The chain runs to 312 residues: MQEFLIPAKPDLQAARESWLKMLARERRLSPETVEAYERDTRQFLHFLTGHCGGSPGISDIANLRPADLRGFLAARRNAGAGARTLGRGLAGIRSLLRFLERRGLVNAAGAAALRAPRQPKSLPKPLTASDAKQVVSVEGQLAEEPWIAARNAAVLTLLYGSGLRISEALGLAGADLASETDTVLRVTGKGGKTRLVPVLPVALRAIAEYRRLCPYHLDPKGLLFRGARGGPLNPAIIQRDMAKLRSALNLPDTATPHALRHSFATHLLGRGGDLRTIQELLGHASLSTTQIYTGVDTARLLEIYESAHPRA.

The region spanning 10–101 is the Core-binding (CB) domain; sequence PDLQAARESW…GIRSLLRFLE (92 aa). One can recognise a Tyr recombinase domain in the interval 122–306; that stretch reads SLPKPLTASD…DTARLLEIYE (185 aa). Residues arginine 165, lysine 190, histidine 258, arginine 261, and histidine 284 contribute to the active site. Tyrosine 293 (O-(3'-phospho-DNA)-tyrosine intermediate) is an active-site residue.

This sequence belongs to the 'phage' integrase family. XerC subfamily. In terms of assembly, forms a cyclic heterotetrameric complex composed of two molecules of XerC and two molecules of XerD.

It localises to the cytoplasm. In terms of biological role, site-specific tyrosine recombinase, which acts by catalyzing the cutting and rejoining of the recombining DNA molecules. The XerC-XerD complex is essential to convert dimers of the bacterial chromosome into monomers to permit their segregation at cell division. It also contributes to the segregational stability of plasmids. This chain is Tyrosine recombinase XerC, found in Mesorhizobium japonicum (strain LMG 29417 / CECT 9101 / MAFF 303099) (Mesorhizobium loti (strain MAFF 303099)).